The chain runs to 409 residues: Formyl-CoA:oxalate CoA-transferase (409 aa).

Residues 17 to 18 (QS), 71 to 74 (LNTK), 95 to 97 (NFG), R103, and 135 to 138 (KAYE) contribute to the CoA site. Catalysis depends on D167, which acts as the Nucleophile. The segment at 221–245 (LAEYPNDDFGDEVPRSGNASGGGQP) is disordered. Position 242–244 (242–244 (GGQ)) interacts with substrate.

This sequence belongs to the CoA-transferase III family. Frc subfamily. As to quaternary structure, homodimer.

The enzyme catalyses formyl-CoA + oxalate = oxalyl-CoA + formate. It functions in the pathway metabolic intermediate degradation; oxalate degradation; CO(2) and formate from oxalate: step 1/2. Functionally, involved in the catabolism of oxalate and in the adapatation to low pH via the induction of the oxalate-dependent acid tolerance response (ATR). Catalyzes the transfer of the CoA moiety from formyl-CoA to oxalate. This Streptomyces avermitilis (strain ATCC 31267 / DSM 46492 / JCM 5070 / NBRC 14893 / NCIMB 12804 / NRRL 8165 / MA-4680) protein is Formyl-CoA:oxalate CoA-transferase.